A 187-amino-acid chain; its full sequence is GTP cyclohydrolase 1 (187 aa).

Cys-78, His-81, and Cys-150 together coordinate Zn(2+).

Belongs to the GTP cyclohydrolase I family. Homomer.

The enzyme catalyses GTP + H2O = 7,8-dihydroneopterin 3'-triphosphate + formate + H(+). It participates in cofactor biosynthesis; 7,8-dihydroneopterin triphosphate biosynthesis; 7,8-dihydroneopterin triphosphate from GTP: step 1/1. This is GTP cyclohydrolase 1 from Brevibacillus brevis (strain 47 / JCM 6285 / NBRC 100599).